Here is a 175-residue protein sequence, read N- to C-terminus: MDIAIHHPWIRRPFFPFHSPSRLFDQFFGEHLLESDLFPTSTSLSPFYLRPPSFLRAPSWFDTGLSEMRLEKDRFSVNLDVKHFSPEELKVKVLGDVIEVHGKHEERQDEHGFISREFHRKYRIPADVDPLTITSSLSSDGVLTVNGPRKQVSGPERTIPITREEKPAVTAAPKK.

Residue M1 is modified to N-acetylmethionine. S19 bears the Phosphoserine mark. S41 carries O-linked (GlcNAc) serine glycosylation. S45 and S59 each carry phosphoserine. Positions 56–164 (RAPSWFDTGL…PERTIPITRE (109 aa)) constitute a sHSP domain. Residue H83 participates in Zn(2+) binding. K92 is subject to N6-acetyllysine; partial. Residues H104, E106, H111, and H119 each coordinate Zn(2+). The segment at 146–175 (NGPRKQVSGPERTIPITREEKPAVTAAPKK) is disordered. K166 is subject to N6-acetyllysine. T170 carries an O-linked (GlcNAc) threonine glycan.

It belongs to the small heat shock protein (HSP20) family. Heteromer composed of three CRYAA and one CRYAB subunits. Aggregates with homologous proteins, including the small heat shock protein HSPB1, to form large heteromeric complexes. Inter-subunit bridging via zinc ions enhances stability, which is crucial as there is no protein turn over in the lens. Interacts with HSPBAP1 and TTN/titin. Interacts with TMEM109; in the cellular response to DNA damage. Interacts with DES; binds rapidly during early stages of DES filament assembly and a reduced binding seen in the later stages. Interacts with TMED10; the interaction mediates the translocation from the cytoplasm into the ERGIC (endoplasmic reticulum-Golgi intermediate compartment) and thereby secretion. Interacts with ATP6V1A and with MTOR, forming a ternary complex. As to expression, lens as well as other tissues. Expressed in myocardial tissue.

It localises to the cytoplasm. The protein localises to the nucleus. It is found in the secreted. The protein resides in the lysosome. May contribute to the transparency and refractive index of the lens. Has chaperone-like activity, preventing aggregation of various proteins under a wide range of stress conditions. In lens epithelial cells, stabilizes the ATP6V1A protein, preventing its degradation by the proteasome. This is Alpha-crystallin B chain from Homo sapiens (Human).